Consider the following 759-residue polypeptide: DNA topoisomerase 3 (759 aa).

In terms of domain architecture, Toprim spans 3–147; sequence RALFVAEKND…RLDIFRARFS (145 aa). Positions 165-590 constitute a Topo IA-type catalytic domain; it reads DEKTVAAVDC…EQIGKYRAIF (426 aa). The O-(5'-phospho-DNA)-tyrosine intermediate role is filled by Tyr334. The segment at 609-715 is disordered; that stretch reads DKNNQAGGGP…KEQEEEEEVF (107 aa). Positions 614 to 639 are enriched in gly residues; sequence AGGGPGGPGGGGGPPRGPGGGGGGGP. The segment covering 640-649 has biased composition (pro residues); sequence TGPPAPPKPP. Zn(2+)-binding residues include Cys716, Cys718, Cys743, and Cys753. The segment at 716 to 759 adopts a GRF-type zinc-finger fold; the sequence is CQCPEPMRAVTKVVQKEGPNKGKKFYTCSLPYTSSEKCNFFKWA.

The protein belongs to the type IA topoisomerase family. Component of the BTR double Holliday Junction dissolution complex composed of at least him-6, top-3, rmh-1 and rmif-2, which is involved in double strand break repair in the germline. May interact with rmh-1.

The protein localises to the nucleus. The catalysed reaction is ATP-independent breakage of single-stranded DNA, followed by passage and rejoining.. Functionally, component of the BTR double Holliday Junction dissolution complex, which is involved in homologous recombination during meiotic double strand break in the germline. Releases the supercoiling and torsional tension of DNA introduced during the DNA replication and transcription by transiently cleaving and rejoining one strand of the DNA duplex. Introduces a single-strand break via transesterification at a target site in duplex DNA. The scissile phosphodiester is attacked by the catalytic tyrosine of the enzyme, resulting in the formation of a DNA-(5'-phosphotyrosyl)-enzyme intermediate and the expulsion of a 3'-OH DNA strand. The free DNA strand than undergoes passage around the unbroken strand thus removing DNA supercoils. Finally, in the religation step, the DNA 3'-OH attacks the covalent intermediate to expel the active-site tyrosine and restore the DNA phosphodiester backbone. The polypeptide is DNA topoisomerase 3 (Caenorhabditis elegans).